A 64-amino-acid chain; its full sequence is Disintegrin schistatin (64 aa).

The Disintegrin domain maps to 1–64; that stretch reads NSVHPCCDPV…PDCPRNRYNV (64 aa). Intrachain disulfides connect cysteine 6–cysteine 29, cysteine 20–cysteine 26, cysteine 25–cysteine 50, and cysteine 38–cysteine 57. The Cell attachment site signature appears at 42–44; sequence RGD.

This sequence belongs to the disintegrin family. Dimeric disintegrin subfamily. As to quaternary structure, homodimer; disulfide-linked. In terms of tissue distribution, expressed by the venom gland.

It localises to the secreted. Functionally, may bind to both alpha-IIb/beta-3 (ITGA2B/ITGB3) and alpha-V/beta-3 (ITGAV/ITGB3) integrins, and may inhibit platelet aggregation. The protein is Disintegrin schistatin of Echis carinatus (Saw-scaled viper).